A 385-amino-acid chain; its full sequence is DNA replication and repair protein RecF (385 aa).

Glycine 30 to threonine 37 provides a ligand contact to ATP.

Belongs to the RecF family.

It localises to the cytoplasm. The RecF protein is involved in DNA metabolism; it is required for DNA replication and normal SOS inducibility. RecF binds preferentially to single-stranded, linear DNA. It also seems to bind ATP. This chain is DNA replication and repair protein RecF, found in Mycobacterium leprae (strain Br4923).